Here is a 304-residue protein sequence, read N- to C-terminus: UDP-3-O-acyl-N-acetylglucosamine deacetylase (304 aa).

Zn(2+) contacts are provided by H78, H237, and D241. The active-site Proton donor is the H264.

This sequence belongs to the LpxC family. The cofactor is Zn(2+).

The catalysed reaction is a UDP-3-O-[(3R)-3-hydroxyacyl]-N-acetyl-alpha-D-glucosamine + H2O = a UDP-3-O-[(3R)-3-hydroxyacyl]-alpha-D-glucosamine + acetate. It participates in glycolipid biosynthesis; lipid IV(A) biosynthesis; lipid IV(A) from (3R)-3-hydroxytetradecanoyl-[acyl-carrier-protein] and UDP-N-acetyl-alpha-D-glucosamine: step 2/6. In terms of biological role, catalyzes the hydrolysis of UDP-3-O-myristoyl-N-acetylglucosamine to form UDP-3-O-myristoylglucosamine and acetate, the committed step in lipid A biosynthesis. The chain is UDP-3-O-acyl-N-acetylglucosamine deacetylase from Acidithiobacillus ferrooxidans (strain ATCC 53993 / BNL-5-31) (Leptospirillum ferrooxidans (ATCC 53993)).